Reading from the N-terminus, the 381-residue chain is ELMO domain-containing protein 3 (381 aa).

Residues 170–324 enclose the ELMO domain; it reads THGRVLQTIY…DLEALAKKSP (155 aa).

As to expression, both isoform 1 and isoform 2 are widely expressed.

The protein resides in the cell projection. It is found in the stereocilium. It localises to the kinocilium. The protein localises to the cytoplasm. Its subcellular location is the cytoskeleton. Functionally, acts as a GTPase-activating protein (GAP) for ARL2 with low specific activity. This chain is ELMO domain-containing protein 3 (Elmod3), found in Mus musculus (Mouse).